We begin with the raw amino-acid sequence, 426 residues long: DNA damage-binding protein 2 (426 aa).

The segment covering 1–11 (MAPRKRPENQK) has biased composition (basic and acidic residues). A disordered region spans residues 1 to 33 (MAPRKRPENQKTPEVVVRPKSKRNRSPRELEPE). Serine 26 is subject to Phosphoserine. N6-acetyllysine is present on residues lysine 35 and lysine 76. Required for interaction with DDB1 regions lie at residues 67-78 (SIVRALHQHKLG) and 86-97 (QQGLQQSFLNSL). 5 WD repeats span residues 115 to 150 (SLAWHPTHPSTLAVGSKGGDILLWNFGIKDKPTFIK), 158 to 193 (ITGMKFNPLNTNQFFTSSMEGTTRLQDFKGNTLRVF), 202 to 237 (WFCSLDVSVKSRVVVTGDNVGHVILLNMDGRELWNL), 243 to 286 (KVTH…SLPH), and 289 to 328 (PVNAAHFSPDGAQLLTTDQKSEIRVYSACQWDCPPSLIPH). A DWD box motif is present at residues 255-273 (WLLATASVDQTVKIWDLRQ). Residues 333 to 335 (FQH) are photolesion recognition. WD repeat units lie at residues 342-385 (SWHP…MYQL) and 395-419 (SLNEFNPMGDTLASVMGYHILVWSP).

Belongs to the WD repeat DDB2/WDR76 family. Component of the UV-DDB complex which includes DDB1 and DDB2. The UV-DDB complex interacts with monoubiquitinated histone H2A and binds to XPC via the DDB2 subunit. Component of the DCX (DDB1-CUL4-X-box) E3 ubiquitin-protein ligase complex DDB1-CUL4-ROC1 (also known as CUL4-DDB-ROC1 and CUL4-DDB-RBX1), which includes CUL4A or CUL4B, DDB1, DDB2 and RBX1. DDB2 may function as the substrate recognition module within this complex. The DDB1-CUL4-ROC1 complex may associate with the COP9 signalosome, and this inhibits the E3 ubiquitin-protein ligase activity of the complex. A large number of other DCX complexes may also exist in which an alternate substrate targeting subunit replaces DDB2. These targeting subunits are generally known as DCAF (DDB1- and CUL4-associated factor) or CDW (CUL4-DDB1-associated WD40-repeat) proteins. Post-translationally, phosphorylation by ABL1 negatively regulate UV-DDB activity. In terms of processing, ubiquitinated by CUL4A in response to UV irradiation. Ubiquitination appears to both impair DNA-binding and promotes ubiquitin-dependent proteolysis. Degradation of DDB2 at sites of DNA damage may be a prerequisite for their recognition by XPC and subsequent repair. CUL4A-mediated degradation appears to be promoted by ABL1. Ubiquitinated, leading to proteasomal degradation, and deubiquitinated by USP24. Deubiquitinated by USP44; leading to its stabilization on DNA lesions. Post-translationally, acetylated. Deacetylation by SIRT6 in response to UV stress facilitates nucleotide excision repair pathway (the NER pathway) transduction.

Its subcellular location is the nucleus. It is found in the chromosome. The protein operates within protein modification; protein ubiquitination. Protein, which is both involved in DNA repair and protein ubiquitination, as part of the UV-DDB complex and DCX (DDB1-CUL4-X-box) complexes, respectively. Core component of the UV-DDB complex (UV-damaged DNA-binding protein complex), a complex that recognizes UV-induced DNA damage and recruit proteins of the nucleotide excision repair pathway (the NER pathway) to initiate DNA repair. The UV-DDB complex preferentially binds to cyclobutane pyrimidine dimers (CPD), 6-4 photoproducts (6-4 PP), apurinic sites and short mismatches. Also functions as the substrate recognition module for the DCX (DDB2-CUL4-X-box) E3 ubiquitin-protein ligase complex DDB2-CUL4-ROC1 (also known as CUL4-DDB-ROC1 and CUL4-DDB-RBX1). The DDB2-CUL4-ROC1 complex may ubiquitinate histone H2A, histone H3 and histone H4 at sites of UV-induced DNA damage. The ubiquitination of histones may facilitate their removal from the nucleosome and promote subsequent DNA repair. The DDB2-CUL4-ROC1 complex also ubiquitinates XPC, which may enhance DNA-binding by XPC and promote NER. The DDB2-CUL4-ROC1 complex also ubiquitinates KAT7/HBO1 in response to DNA damage, leading to its degradation: recognizes KAT7/HBO1 following phosphorylation by ATR. This Bos taurus (Bovine) protein is DNA damage-binding protein 2 (DDB2).